Reading from the N-terminus, the 815-residue chain is Vacuolar proton translocating ATPase 100 kDa subunit (815 aa).

Residues 1–402 (MSFLRPSIWR…NAYGIAHYRE (402 aa)) are Cytoplasmic-facing. Residues 403-421 (VNPAVLTIVTFPFLFGVMF) traverse the membrane as a helical segment. Topologically, residues 422–423 (GD) are vacuolar. Residues 424 to 440 (VGHGALLLLSALGLISL) form a helical membrane-spanning segment. Residues 441–454 (EKKLAGKKLNELIQ) lie on the Cytoplasmic side of the membrane. Residues 455-484 (MPFDGRYVLFLMSLFSIYVGFIYNECFSIP) form a helical membrane-spanning segment. The Vacuolar portion of the chain corresponds to 485–530 (MNIFGSQYNLNSTTGLYTYQHTDRVYPVGVDPLWKGAPNELVYYNS). A helical transmembrane segment spans residues 531–550 (FKMKLSIIFGVVQMSVGICF). At 551 to 571 (SLLNYLNQKGPIKIVNILTQF) the chain is on the cytoplasmic side. The chain crosses the membrane as a helical span at residues 572–592 (VPQMIFLWSIFGYMSVLIILK). Residues 593 to 639 (WVVPYRSFEVDKVDPPFILPTIIAMFLSPGGTPDVVFFSGQGAVQTA) lie on the Vacuolar side of the membrane. The chain crosses the membrane as a helical span at residues 640–659 (LLFLALISIPVMLVIKPLFM). The Cytoplasmic portion of the chain corresponds to 660-706 (KRFHFQEVERKKLGHHEEEHDDEALYTGHHGEEFEMGEVFVHQVIHT). A helical membrane pass occupies residues 707-731 (IEFVLGAVSNTASYLRLWALSLAHS). Over 732–749 (ELSSVFWERILIGQVERG) the chain is Vacuolar. The chain crosses the membrane as a helical span at residues 750–788 (NPFLAFVGFGAWLGASVAVLLLMESLSAFLHALRLHWVE). Residues 789-815 (FQNKFYIGDGVRFIPYSATRILSEDDE) are Cytoplasmic-facing.

This sequence belongs to the V-ATPase 116 kDa subunit family. The V-ATPase is a heteromultimeric enzyme.

Its subcellular location is the cytoplasmic vesicle membrane. The protein resides in the endosome membrane. It localises to the vacuole membrane. It is found in the lysosome membrane. In terms of biological role, essential component of the vacuolar proton pump (V-ATPase), a multimeric enzyme that catalyzes the translocation of protons across the membranes. Required for assembly and activity of the V-ATPase. Required in both the contractile vacuole system and the endosomal/lysosomal system. Also required for cytosolic pH regulation. The chain is Vacuolar proton translocating ATPase 100 kDa subunit (vatM) from Dictyostelium discoideum (Social amoeba).